The sequence spans 327 residues: Phenylalanine--tRNA ligase alpha subunit (327 aa).

Glu-252 lines the Mg(2+) pocket.

Belongs to the class-II aminoacyl-tRNA synthetase family. Phe-tRNA synthetase alpha subunit type 1 subfamily. In terms of assembly, tetramer of two alpha and two beta subunits. Mg(2+) is required as a cofactor.

It is found in the cytoplasm. The enzyme catalyses tRNA(Phe) + L-phenylalanine + ATP = L-phenylalanyl-tRNA(Phe) + AMP + diphosphate + H(+). This Hamiltonella defensa subsp. Acyrthosiphon pisum (strain 5AT) protein is Phenylalanine--tRNA ligase alpha subunit.